A 40-amino-acid polypeptide reads, in one-letter code: Dolichyl-diphosphooligosaccharide--protein glycosyltransferase subunit 4 (40 aa).

Residues 1–4 are Lumenal-facing; that stretch reads MITD. Residues 5–25 traverse the membrane as a helical segment; the sequence is VQLAIFSNVLGVFLFLLVVAY. At 26–40 the chain is on the cytoplasmic side; that stretch reads HYINANTGKSSIKNK.

This sequence belongs to the OST4 family. Component of the oligosaccharyltransferase (OST) complex.

Its subcellular location is the endoplasmic reticulum membrane. Functionally, subunit of the oligosaccharyl transferase (OST) complex that catalyzes the initial transfer of a defined glycan (Glc(3)Man(9)GlcNAc(2) in eukaryotes) from the lipid carrier dolichol-pyrophosphate to an asparagine residue within an Asn-X-Ser/Thr consensus motif in nascent polypeptide chains, the first step in protein N-glycosylation. N-glycosylation occurs cotranslationally and the complex associates with the Sec61 complex at the channel-forming translocon complex that mediates protein translocation across the endoplasmic reticulum (ER). All subunits are required for a maximal enzyme activity. This chain is Dolichyl-diphosphooligosaccharide--protein glycosyltransferase subunit 4, found in Drosophila mojavensis (Fruit fly).